The sequence spans 394 residues: UPF0284 protein SYNW1869 (394 aa).

It belongs to the UPF0284 family.

This chain is UPF0284 protein SYNW1869, found in Parasynechococcus marenigrum (strain WH8102).